The sequence spans 277 residues: Large ribosomal subunit protein uL2 (277 aa).

Disordered regions lie at residues 35-57 (RPLHSKGGRNVHGRITTRHQGGG) and 222-277 (GVAM…NRRR). 2 stretches are compositionally biased toward basic residues: residues 37–57 (LHSKGGRNVHGRITTRHQGGG) and 268–277 (VRRRKQNRRR).

The protein belongs to the universal ribosomal protein uL2 family. As to quaternary structure, part of the 50S ribosomal subunit. Forms a bridge to the 30S subunit in the 70S ribosome.

One of the primary rRNA binding proteins. Required for association of the 30S and 50S subunits to form the 70S ribosome, for tRNA binding and peptide bond formation. It has been suggested to have peptidyltransferase activity; this is somewhat controversial. Makes several contacts with the 16S rRNA in the 70S ribosome. This chain is Large ribosomal subunit protein uL2, found in Frankia casuarinae (strain DSM 45818 / CECT 9043 / HFP020203 / CcI3).